The chain runs to 184 residues: Cbp/p300-interacting transactivator 4 (184 aa).

The segment covering 18–28 (PSAAAAHGPHA) has biased composition (low complexity). Disordered stretches follow at residues 18–67 (PSAA…YGAF) and 94–128 (TPYPGRAAAPPNAPGGPPGPQPAPSAAAPPPPAHA). A compositionally biased stretch (pro residues) spans 104–126 (PNAPGGPPGPQPAPSAAAPPPPA).

This sequence belongs to the CITED family. In terms of assembly, interacts via its C-terminal region with the CH1 domain of CREBBP and EP300. Interacts with all TFAP2/AP-2 isoforms. As to expression, expressed in most tissues examined with highest levels of expression in heart, liver, skeletal muscle and pancreas. Also expressed in bladder cell line ECV-304 and in various breast cancer cell lines. Also detected in both in situ and invasive breast tumors where its expression is down-regulated and mostly restricted to the cytoplasm of malignant epithelium. Down-regulation of expression is associated with elevated levels of HIF1A and increased tumor growth and angiogenesis.

It localises to the nucleus. It is found in the cytoplasm. Acts as a transcriptional coactivator for TFAP2/AP-2. Enhances estrogen-dependent transactivation mediated by estrogen receptors. May function as an inhibitor of transactivation by HIF1A by disrupting HIF1A interaction with CREBBP. May be involved in regulation of gene expression during development and differentiation of blood cells, endothelial cells and mammary epithelial cells. The protein is Cbp/p300-interacting transactivator 4 of Homo sapiens (Human).